The chain runs to 267 residues: Tryptophan synthase alpha chain (267 aa).

Active-site proton acceptor residues include glutamate 49 and aspartate 60.

Belongs to the TrpA family. Tetramer of two alpha and two beta chains.

It catalyses the reaction (1S,2R)-1-C-(indol-3-yl)glycerol 3-phosphate + L-serine = D-glyceraldehyde 3-phosphate + L-tryptophan + H2O. It functions in the pathway amino-acid biosynthesis; L-tryptophan biosynthesis; L-tryptophan from chorismate: step 5/5. Functionally, the alpha subunit is responsible for the aldol cleavage of indoleglycerol phosphate to indole and glyceraldehyde 3-phosphate. The polypeptide is Tryptophan synthase alpha chain (Rippkaea orientalis (strain PCC 8801 / RF-1) (Cyanothece sp. (strain PCC 8801))).